The primary structure comprises 480 residues: 2-phosphoxylose phosphatase 1 (480 aa).

Topologically, residues 1-6 (MLYRNR) are cytoplasmic. A helical; Signal-anchor for type II membrane protein membrane pass occupies residues 7–27 (FLVLLALAGLLAFLSLSLQFF). Residues 28-480 (HLIPVSTTKN…YYDACHGEGA (453 aa)) lie on the Lumenal side of the membrane. His-97 serves as the catalytic Nucleophile. N-linked (GlcNAc...) asparagine glycosylation is found at Asn-194, Asn-305, and Asn-354. Asp-379 (proton donor) is an active-site residue.

The protein belongs to the histidine acid phosphatase family. Interacts with B3GAT3; the interaction increases the 2-phosphoxylose phosphatase activity of PXYLP1 during completion of linkage region formation in a B3GAT3-mediated manner.

It is found in the golgi apparatus membrane. It catalyses the reaction 3-O-[beta-D-GlcA-(1-&gt;3)-beta-D-Gal-(1-&gt;3)-beta-D-Gal-(1-&gt;4)-beta-D-2-O-P-Xyl]-L-seryl-[protein] + H2O = 3-O-(beta-D-GlcA-(1-&gt;3)-beta-D-Gal-(1-&gt;3)-beta-D-Gal-(1-&gt;4)-beta-D-Xyl)-L-seryl-[protein] + phosphate. Functionally, responsible for the 2-O-dephosphorylation of xylose in the glycosaminoglycan-protein linkage region of proteoglycans thereby regulating the amount of mature glycosaminoglycan (GAG) chains. Sulfated glycosaminoglycans (GAGs), including heparan sulfate and chondroitin sulfate, are synthesized on the so-called common GAG-protein linkage region (GlcUAbeta1-3Galbeta1-3Galbeta1-4Xylbeta1-O-Ser) of core proteins, which is formed by the stepwise addition of monosaccharide residues by the respective specific glycosyltransferases. Xylose 2-O-dephosphorylation during completion of linkage region formation is a prerequisite for the initiation and efficient elongation of the repeating disaccharide region of GAG chains. This Rattus norvegicus (Rat) protein is 2-phosphoxylose phosphatase 1.